The sequence spans 185 residues: ARGSTCAVFGLGGVGLSVIMGCKAAGASRIIAVDINSDKFAKAKELGATDCINPKDHKEPIHKVLIGMTGYGVDYSFEVIGRIETMVAALASCHYNYGVSVIVGVPPAAQNITFDPMLLFSGRTWKGSVFGGWKSKDSVPKLVADYMKKKFVLDPLITHTLPFSKINEGFDLLRAGKSIRSVLTF.

NAD(+) contacts are provided by residues 10–15 (GLGGVG), Asp-34, Lys-39, 103–105 (VGV), and Arg-180.

This sequence belongs to the zinc-containing alcohol dehydrogenase family. Class-I subfamily. Homodimer. Zn(2+) serves as cofactor.

Its subcellular location is the cytoplasm. It catalyses the reaction a primary alcohol + NAD(+) = an aldehyde + NADH + H(+). It carries out the reaction a secondary alcohol + NAD(+) = a ketone + NADH + H(+). In Anas platyrhynchos (Mallard), this protein is Alcohol dehydrogenase 1 (ADH1).